Reading from the N-terminus, the 438-residue chain is MVSALNPRTTEFEFGGLIGALGISIGLPVFTIILNQMIRPDYFIKGFFQNFDIVELWNGIKPLRYYLGNRELWTVYCLWYGILAVLDVILPGRVMKGVQLRDGSKLSYKINGIAMSTTLVLVLAIRWKLTDGQLPELQYLYENHVSLCIISILFSFFLATYCYVASFIPLIFKKNGNGKREKILALGGNSGNIIYDWFIGRELNPRLGPLDIKMFSELRPGMLLWLLINLSCLHHHYLKTGKINDALVLVNFLQGFYIFDGVLNEEGVLTMMDITTDGFGFMLAFGDLSLVPFTYSLQARYLSVSPVELGWVKVVGILAIMFLGFHIFHSANKQKSEFRQGKLENLKSIQTKRGTKLLCDGWWAKSQHINYFGDWLISLSWCLATWFQTPLTYYYSLYFATLLLHRQQRDEHKCRLKYGENWEEYERKVPYKIIPYVY.

Topologically, residues 1-13 (MVSALNPRTTEFE) are lumenal. Residues 14-34 (FGGLIGALGISIGLPVFTIIL) traverse the membrane as a helical segment. At 35-71 (NQMIRPDYFIKGFFQNFDIVELWNGIKPLRYYLGNRE) the chain is on the cytoplasmic side. Residues 72-90 (LWTVYCLWYGILAVLDVIL) form a helical membrane-spanning segment. Over 91–109 (PGRVMKGVQLRDGSKLSYK) the chain is Lumenal. A helical membrane pass occupies residues 110–127 (INGIAMSTTLVLVLAIRW). At 128–147 (KLTDGQLPELQYLYENHVSL) the chain is on the cytoplasmic side. A helical membrane pass occupies residues 148–172 (CIISILFSFFLATYCYVASFIPLIF). Residues 173-242 (KKNGNGKREK…LHHHYLKTGK (70 aa)) lie on the Lumenal side of the membrane. Residues 243 to 263 (INDALVLVNFLQGFYIFDGVL) traverse the membrane as a helical segment. The Cytoplasmic portion of the chain corresponds to 264 to 308 (NEEGVLTMMDITTDGFGFMLAFGDLSLVPFTYSLQARYLSVSPVE). Residues 309–328 (LGWVKVVGILAIMFLGFHIF) traverse the membrane as a helical segment. The Lumenal portion of the chain corresponds to 329–368 (HSANKQKSEFRQGKLENLKSIQTKRGTKLLCDGWWAKSQH). Residues Lys-335, Arg-339, Leu-358, Trp-363, 370–371 (NY), Asp-410, 414–418 (CRLKY), and Tyr-425 contribute to the NADP(+) site. The chain crosses the membrane as a helical span at residues 369–387 (INYFGDWLISLSWCLATWF). Topologically, residues 388–438 (QTPLTYYYSLYFATLLLHRQQRDEHKCRLKYGENWEEYERKVPYKIIPYVY) are cytoplasmic.

Belongs to the ERG4/ERG24 family.

It localises to the membrane. It catalyses the reaction 4,4-dimethyl-5alpha-cholesta-8,24-dien-3beta-ol + NADP(+) = 4,4-dimethyl-5alpha-cholesta-8,14,24-trien-3beta-ol + NADPH + H(+). Its pathway is steroid biosynthesis; zymosterol biosynthesis; zymosterol from lanosterol: step 2/6. Its activity is regulated as follows. Inhibited by the morpholine antifungal drug fenpropimorph. In terms of biological role, delta(14)-sterol reductase; part of the third module of ergosterol biosynthesis pathway that includes the late steps of the pathway. ERG24 reduces the C14=C15 double bond of 4,4-dimethyl-cholesta-8,14,24-trienol to produce 4,4-dimethyl-cholesta-8,24-dienol. The third module or late pathway involves the ergosterol synthesis itself through consecutive reactions that mainly occur in the endoplasmic reticulum (ER) membrane. Firstly, the squalene synthase ERG9 catalyzes the condensation of 2 farnesyl pyrophosphate moieties to form squalene, which is the precursor of all steroids. Squalene synthase is crucial for balancing the incorporation of farnesyl diphosphate (FPP) into sterol and nonsterol isoprene synthesis. Secondly, the squalene epoxidase ERG1 catalyzes the stereospecific oxidation of squalene to (S)-2,3-epoxysqualene, which is considered to be a rate-limiting enzyme in steroid biosynthesis. Then, the lanosterol synthase ERG7 catalyzes the cyclization of (S)-2,3 oxidosqualene to lanosterol, a reaction that forms the sterol core. In the next steps, lanosterol is transformed to zymosterol through a complex process involving various demethylation, reduction and desaturation reactions. The lanosterol 14-alpha-demethylase ERG11 (also known as CYP51) catalyzes C14-demethylation of lanosterol to produce 4,4'-dimethyl cholesta-8,14,24-triene-3-beta-ol, which is critical for ergosterol biosynthesis. The C-14 reductase ERG24 reduces the C14=C15 double bond of 4,4-dimethyl-cholesta-8,14,24-trienol to produce 4,4-dimethyl-cholesta-8,24-dienol. 4,4-dimethyl-cholesta-8,24-dienol is substrate of the C-4 demethylation complex ERG25-ERG26-ERG27 in which ERG25 catalyzes the three-step monooxygenation required for the demethylation of 4,4-dimethyl and 4alpha-methylsterols, ERG26 catalyzes the oxidative decarboxylation that results in a reduction of the 3-beta-hydroxy group at the C-3 carbon to an oxo group, and ERG27 is responsible for the reduction of the keto group on the C-3. ERG28 has a role as a scaffold to help anchor ERG25, ERG26 and ERG27 to the endoplasmic reticulum and ERG29 regulates the activity of the iron-containing C4-methylsterol oxidase ERG25. Then, the sterol 24-C-methyltransferase ERG6 catalyzes the methyl transfer from S-adenosyl-methionine to the C-24 of zymosterol to form fecosterol. The C-8 sterol isomerase ERG2 catalyzes the reaction which results in unsaturation at C-7 in the B ring of sterols and thus converts fecosterol to episterol. The sterol-C5-desaturase ERG3 then catalyzes the introduction of a C-5 double bond in the B ring to produce 5-dehydroepisterol. The C-22 sterol desaturase ERG5 further converts 5-dehydroepisterol into ergosta-5,7,22,24(28)-tetraen-3beta-ol by forming the C-22(23) double bond in the sterol side chain. Finally, ergosta-5,7,22,24(28)-tetraen-3beta-ol is substrate of the C-24(28) sterol reductase ERG4 to produce ergosterol. The sequence is that of Delta(14)-sterol reductase ERG24 from Saccharomyces cerevisiae (strain ATCC 204508 / S288c) (Baker's yeast).